Here is a 198-residue protein sequence, read N- to C-terminus: Phage-like element PBSX protein XkdA (198 aa).

The protein to B.subtilis YqaB.

This Bacillus subtilis (strain 168) protein is Phage-like element PBSX protein XkdA (xkdA).